The primary structure comprises 416 residues: Serine hydroxymethyltransferase (416 aa).

(6S)-5,6,7,8-tetrahydrofolate is bound by residues Leu-121 and 125–127 (GHL). At Lys-229 the chain carries N6-(pyridoxal phosphate)lysine. (6S)-5,6,7,8-tetrahydrofolate-binding positions include Glu-245 and 354-356 (SPF).

It belongs to the SHMT family. As to quaternary structure, homodimer. Pyridoxal 5'-phosphate is required as a cofactor.

The protein localises to the cytoplasm. The enzyme catalyses (6R)-5,10-methylene-5,6,7,8-tetrahydrofolate + glycine + H2O = (6S)-5,6,7,8-tetrahydrofolate + L-serine. It participates in one-carbon metabolism; tetrahydrofolate interconversion. It functions in the pathway amino-acid biosynthesis; glycine biosynthesis; glycine from L-serine: step 1/1. Functionally, catalyzes the reversible interconversion of serine and glycine with tetrahydrofolate (THF) serving as the one-carbon carrier. This reaction serves as the major source of one-carbon groups required for the biosynthesis of purines, thymidylate, methionine, and other important biomolecules. Also exhibits THF-independent aldolase activity toward beta-hydroxyamino acids, producing glycine and aldehydes, via a retro-aldol mechanism. The polypeptide is Serine hydroxymethyltransferase (Aliivibrio fischeri (strain ATCC 700601 / ES114) (Vibrio fischeri)).